Consider the following 467-residue polypeptide: UDP-N-acetylmuramate--L-alanine ligase (467 aa).

An ATP-binding site is contributed by 114-120 (GTHGKTT).

It belongs to the MurCDEF family.

It is found in the cytoplasm. It carries out the reaction UDP-N-acetyl-alpha-D-muramate + L-alanine + ATP = UDP-N-acetyl-alpha-D-muramoyl-L-alanine + ADP + phosphate + H(+). The protein operates within cell wall biogenesis; peptidoglycan biosynthesis. Cell wall formation. This Rhodopseudomonas palustris (strain TIE-1) protein is UDP-N-acetylmuramate--L-alanine ligase.